The chain runs to 463 residues: Asparagine--tRNA ligase (463 aa).

The protein belongs to the class-II aminoacyl-tRNA synthetase family. Homodimer.

It localises to the cytoplasm. The enzyme catalyses tRNA(Asn) + L-asparagine + ATP = L-asparaginyl-tRNA(Asn) + AMP + diphosphate + H(+). The sequence is that of Asparagine--tRNA ligase from Bacillus thuringiensis subsp. konkukian (strain 97-27).